We begin with the raw amino-acid sequence, 205 residues long: DUF724 domain-containing protein 4 (205 aa).

Positions 28 to 59 (DASGRGKRRRVEQEHHSDLNNETAAPTGGSAG) are disordered. One can recognise a DUF724 domain in the interval 63 to 189 (VLPFTKTLAS…MADDYSKLKK (127 aa)).

As to expression, expressed in roots, leaves, stems, flowers and siliques.

Its subcellular location is the nucleus. Its function is as follows. May be involved in the polar growth of plant cells via transportation of RNAs. This chain is DUF724 domain-containing protein 4, found in Arabidopsis thaliana (Mouse-ear cress).